The following is a 311-amino-acid chain: Ribosomal protein L11 methyltransferase (311 aa).

Residues Thr163, Gly184, Asp206, and Asn248 each coordinate S-adenosyl-L-methionine.

This sequence belongs to the methyltransferase superfamily. PrmA family.

The protein localises to the cytoplasm. It catalyses the reaction L-lysyl-[protein] + 3 S-adenosyl-L-methionine = N(6),N(6),N(6)-trimethyl-L-lysyl-[protein] + 3 S-adenosyl-L-homocysteine + 3 H(+). Methylates ribosomal protein L11. In Clostridium acetobutylicum (strain ATCC 824 / DSM 792 / JCM 1419 / IAM 19013 / LMG 5710 / NBRC 13948 / NRRL B-527 / VKM B-1787 / 2291 / W), this protein is Ribosomal protein L11 methyltransferase.